A 390-amino-acid chain; its full sequence is 5-hydroxytryptamine receptor 1B (390 aa).

The Extracellular portion of the chain corresponds to 1 to 46; the sequence is MEEPGAQCAPPPPAGSETWVPQANLSSAPSQNCSAKDYIYQDSISL. N24 and N32 each carry an N-linked (GlcNAc...) asparagine glycan. A helical transmembrane segment spans residues 47–72; it reads PWKVLLVMLLALITLATTLSNAFVIA. Over 73–86 the chain is Cytoplasmic; it reads TVYRTRKLHTPANY. The helical transmembrane segment at 87 to 111 threads the bilayer; it reads LIASLAVTDLLVSILVMPISTMYTV. The Extracellular segment spans residues 112–119; that stretch reads TGRWTLGQ. Residues 120-145 traverse the membrane as a helical segment; that stretch reads VVCDFWLSSDITCCTASILHLCVIAL. A disulfide bridge links C122 with C199. 2 residues coordinate ergotamine: D129 and T134. Positions 146-148 match the DRY motif; important for ligand-induced conformation changes and signaling motif; it reads DRY. Over 146-165 the chain is Cytoplasmic; the sequence is DRYWAITDAVEYSAKRTPKR. Residues 166–184 traverse the membrane as a helical segment; it reads AAVMIALVWVFSISISLPP. Topologically, residues 185–205 are extracellular; the sequence is FFWRQAKAEEEVSECVVNTDH. Residue V201 coordinates ergotamine. Residues 206–229 form a helical membrane-spanning segment; that stretch reads ILYTVYSTVGAFYFPTLLLIALYG. The Cytoplasmic portion of the chain corresponds to 230 to 315; the sequence is RIYVEARSRI…AARERKATKT (86 aa). A compositionally biased stretch (polar residues) spans 259–272; it reads DSPGSTSSVTSINS. The segment at 259–281 is disordered; sequence DSPGSTSSVTSINSRVPDVPSES. The chain crosses the membrane as a helical span at residues 316-337; it reads LGIILGAFIVCWLPFFIISLVM. Residues 338–347 lie on the Extracellular side of the membrane; sequence PICKDACWFH. The helical transmembrane segment at 348–370 threads the bilayer; it reads LAIFDFFTWLGYLNSLINPIIYT. The NPxxY motif; important for ligand-induced conformation changes and signaling signature appears at 365–369; it reads NPIIY. The Cytoplasmic segment spans residues 371–390; sequence MSNEDFKQAFHKLIRFKCTS. C388 carries the S-palmitoyl cysteine lipid modification.

Belongs to the G-protein coupled receptor 1 family. In terms of assembly, homodimer. Heterodimer with HTR1D. Phosphorylated. Desensitization of the receptor may be mediated by its phosphorylation. Post-translationally, palmitoylated. In terms of tissue distribution, detected in cerebral artery smooth muscle cells (at protein level). Detected in brain cortex, striatum, amygdala, medulla, hippocampus, caudate nucleus and putamen.

The protein localises to the cell membrane. Its function is as follows. G-protein coupled receptor for 5-hydroxytryptamine (serotonin). Also functions as a receptor for ergot alkaloid derivatives, various anxiolytic and antidepressant drugs and other psychoactive substances, such as lysergic acid diethylamide (LSD). Ligand binding causes a conformation change that triggers signaling via guanine nucleotide-binding proteins (G proteins) and modulates the activity of downstream effectors, such as adenylate cyclase. HTR1B is coupled to G(i)/G(o) G alpha proteins and mediates inhibitory neurotransmission by inhibiting adenylate cyclase activity. Arrestin family members inhibit signaling via G proteins and mediate activation of alternative signaling pathways. Regulates the release of 5-hydroxytryptamine, dopamine and acetylcholine in the brain, and thereby affects neural activity, nociceptive processing, pain perception, mood and behavior. Besides, plays a role in vasoconstriction of cerebral arteries. This Homo sapiens (Human) protein is 5-hydroxytryptamine receptor 1B.